We begin with the raw amino-acid sequence, 160 residues long: Phosphopantetheine adenylyltransferase (160 aa).

T10 contributes to the substrate binding site. ATP is bound by residues 10–11 (TF) and H18. Residues K42, L74, and R88 each coordinate substrate. ATP is bound by residues 89-91 (GLR), E99, and 124-130 (NSFISST).

This sequence belongs to the bacterial CoaD family. As to quaternary structure, homohexamer. Mg(2+) serves as cofactor.

It is found in the cytoplasm. The catalysed reaction is (R)-4'-phosphopantetheine + ATP + H(+) = 3'-dephospho-CoA + diphosphate. It participates in cofactor biosynthesis; coenzyme A biosynthesis; CoA from (R)-pantothenate: step 4/5. In terms of biological role, reversibly transfers an adenylyl group from ATP to 4'-phosphopantetheine, yielding dephospho-CoA (dPCoA) and pyrophosphate. The protein is Phosphopantetheine adenylyltransferase of Aeromonas salmonicida (strain A449).